Reading from the N-terminus, the 84-residue chain is MKVVLIVCLVWVMAMMELVSCECWSQADCSDGHCCAGSSFSKNCRPYGGDGEQCEPRNKYEVYSTGCPCEENLMCSVINRCQSA.

An N-terminal signal peptide occupies residues 1-21 (MKVVLIVCLVWVMAMMELVSC). 5 disulfide bridges follow: Cys23–Cys35, Cys29–Cys44, Cys34–Cys67, Cys54–Cys75, and Cys69–Cys81.

The protein belongs to the AVIT (prokineticin) family. Expressed by the venom gland.

It localises to the secreted. The protein is U8-theraphotoxin-Hhn1c 1 of Cyriopagopus hainanus (Chinese bird spider).